Here is a 244-residue protein sequence, read N- to C-terminus: Triosephosphate isomerase (244 aa).

A substrate-binding site is contributed by 9–11 (NWK). His93 acts as the Electrophile in catalysis. Catalysis depends on Glu160, which acts as the Proton acceptor. Substrate is bound by residues Gly166 and Ser206.

It belongs to the triosephosphate isomerase family. Homodimer.

Its subcellular location is the cytoplasm. It catalyses the reaction D-glyceraldehyde 3-phosphate = dihydroxyacetone phosphate. Its pathway is carbohydrate biosynthesis; gluconeogenesis. It functions in the pathway carbohydrate degradation; glycolysis; D-glyceraldehyde 3-phosphate from glycerone phosphate: step 1/1. Functionally, involved in the gluconeogenesis. Catalyzes stereospecifically the conversion of dihydroxyacetone phosphate (DHAP) to D-glyceraldehyde-3-phosphate (G3P). In Mycoplasma genitalium (strain ATCC 33530 / DSM 19775 / NCTC 10195 / G37) (Mycoplasmoides genitalium), this protein is Triosephosphate isomerase.